A 654-amino-acid chain; its full sequence is Spindle assembly abnormal protein 6 homolog (654 aa).

The PISA domain maps to 39–91 (VHRKDLVIRLTDDTDPFFLYNLVISEEDFQSLKLQQGLLVDFLAFPQKFIDLL). Positions 175-471 (TRQLHITQET…QLLKNNEKLI (297 aa)) form a coiled coil. S509 carries the post-translational modification Phosphoserine. The interval 568–589 (ASIDGQPGAAVNRPCSNDKENG) is disordered. S612 is subject to Phosphoserine. Positions 634-644 (SKPTVLPSSSS) are enriched in low complexity. Residues 634–654 (SKPTVLPSSSSAYFPGQLPSS) are disordered. At S654 the chain carries Phosphoserine.

Nine homodimers form a cartwheel structure with an internal diameter of 23 nm and radial spokes connecting to the microtubule triplets. Forms a complex with CPAP and STIL. Interacts with FBXW5. Interacts with NUP62 and TUBG1 at the centrosome. Interacts with CENATAC; the interaction increases with CENATAC acetylation. Interacts with FZR1; the interaction is regulated by CENATAC and leads to SASS6 proteasomal degradation. In terms of processing, ubiquitinated by the SCF(FBXW5) E3 ubiquitin-protein ligase complex during S phase, leading to its degradation and preventing centriole reduplication. Ubiquitinated by the anaphase promoting complex/cyclosome (APC/C) E3 ubiquitin-protein ligase complex, leading to its degradation and preventing centriole reduplication.

It localises to the cytoplasm. Its subcellular location is the cytoskeleton. The protein resides in the microtubule organizing center. It is found in the centrosome. The protein localises to the centriole. Its function is as follows. Central scaffolding component of the centrioles ensuring their 9-fold symmetry. Required for centrosome biogenesis and duplication. Required both for mother-centriole-dependent centriole duplication and deuterosome-dependent centriole amplification in multiciliated cells. Not required for centriole formation in embryonic stem cells but necessary to maintain centriole architecture. Required for the recruitment of STIL to the procentriole and for STIL-mediated centriole amplification. This chain is Spindle assembly abnormal protein 6 homolog, found in Mus musculus (Mouse).